A 722-amino-acid chain; its full sequence is Zinc finger BED domain-containing protein RICESLEEPER 2 (722 aa).

A BED-type zinc finger spans residues 66–134 (RKKSLVWEHF…QEHKLALTPA (69 aa)). 4 residues coordinate Zn(2+): Cys89, Cys92, His113, and His127. A disordered region spans residues 572 to 592 (VEQGDGNNAPASENGTQATAP). Over residues 576–592 (DGNNAPASENGTQATAP) the composition is skewed to polar residues. The HATC (Hobo-Ac-Tam3) domain stretch occupies residues 617-702 (ELEQYLDESL…EALVCAKDWL (86 aa)).

Homodimer.

It localises to the nucleus. Functionally, transposase-like protein that is essential for plant growth and development. May regulate global gene expression by recruiting other cellular factors. This Oryza sativa subsp. japonica (Rice) protein is Zinc finger BED domain-containing protein RICESLEEPER 2.